Consider the following 192-residue polypeptide: Transcription termination/antitermination protein NusG (192 aa).

In terms of domain architecture, KOW spans 140–168 (VGEIVIVTDGPFETFTGTVEEIDQEKNRL).

It belongs to the NusG family.

Its function is as follows. Participates in transcription elongation, termination and antitermination. In Rickettsia felis (strain ATCC VR-1525 / URRWXCal2) (Rickettsia azadi), this protein is Transcription termination/antitermination protein NusG.